A 682-amino-acid chain; its full sequence is Potassium-transporting ATPase ATP-binding subunit (682 aa).

The next 4 helical transmembrane spans lie at 34-54 (PVMFIVWIGSLLTTCISIAMA), 62-82 (ALFSAAISGWLWVTVLFANFA), 219-239 (IALTILLIALTIVFLLATATL), and 254-274 (VLVALLVCLIPTTIGGLLSAI). Residue aspartate 307 is the 4-aspartylphosphate intermediate of the active site. Residues aspartate 344, glutamate 348, 377 to 384 (FTAQSRMS), and lysine 395 each bind ATP. Mg(2+) contacts are provided by aspartate 518 and aspartate 522. The next 3 helical transmembrane spans lie at 588 to 608 (FAIIPAAFAATYPQLNALNIM), 616 to 636 (AILSAVIFNALIIVFLIPLAL), and 656 to 676 (IYGLGGLLVPFIGIKVIDLLL).

The protein belongs to the cation transport ATPase (P-type) (TC 3.A.3) family. Type IA subfamily. The system is composed of three essential subunits: KdpA, KdpB and KdpC.

It is found in the cell inner membrane. It catalyses the reaction K(+)(out) + ATP + H2O = K(+)(in) + ADP + phosphate + H(+). In terms of biological role, part of the high-affinity ATP-driven potassium transport (or Kdp) system, which catalyzes the hydrolysis of ATP coupled with the electrogenic transport of potassium into the cytoplasm. This subunit is responsible for energy coupling to the transport system and for the release of the potassium ions to the cytoplasm. The sequence is that of Potassium-transporting ATPase ATP-binding subunit from Shigella sonnei (strain Ss046).